Consider the following 129-residue polypeptide: MLAPQYRLRSTALFGQTIRNGRKKGSRTVVVHVLAGGSRAEELPLPLQEGATAGPRMGLVVSKAVGNAVTRHNTSRKLRHAFRAVMEEDSLDFPVGTTVVIRALPKSATASFEELVGDVRSCIRRALPR.

This sequence belongs to the RnpA family. Consists of a catalytic RNA component (M1 or rnpB) and a protein subunit.

The catalysed reaction is Endonucleolytic cleavage of RNA, removing 5'-extranucleotides from tRNA precursor.. Its function is as follows. RNaseP catalyzes the removal of the 5'-leader sequence from pre-tRNA to produce the mature 5'-terminus. It can also cleave other RNA substrates such as 4.5S RNA. The protein component plays an auxiliary but essential role in vivo by binding to the 5'-leader sequence and broadening the substrate specificity of the ribozyme. The protein is Ribonuclease P protein component of Corynebacterium jeikeium (strain K411).